The primary structure comprises 47 residues: PhoP/PhoQ regulator MgrB (47 aa).

Residues 6–26 (WVILIIVLIACVILWTQTINV) traverse the membrane as a helical segment.

The protein belongs to the MgrB family. May form homooligomers. Probably interacts with the periplasmic domain of PhoQ.

The protein resides in the cell inner membrane. In terms of biological role, phoP-regulated transcription is redox-sensitive, being activated when the periplasm becomes more reducing. MgrB acts between DsbA/DsbB and PhoP/PhoQ in this pathway. Represses PhoP/PhoQ signaling, possibly by binding to the periplasmic domain of PhoQ, altering its activity and that of downstream effector PhoP. The chain is PhoP/PhoQ regulator MgrB from Enterobacter sp. (strain 638).